Consider the following 260-residue polypeptide: Phosphate import ATP-binding protein PstB 2 (260 aa).

The ABC transporter domain maps to 9 to 255 (IKVKDLSFYY…PLDSRTRDYV (247 aa)). An ATP-binding site is contributed by 41–48 (GPSGCGKS).

This sequence belongs to the ABC transporter superfamily. Phosphate importer (TC 3.A.1.7) family. The complex is composed of two ATP-binding proteins (PstB), two transmembrane proteins (PstC and PstA) and a solute-binding protein (PstS).

Its subcellular location is the cell inner membrane. It carries out the reaction phosphate(out) + ATP + H2O = ADP + 2 phosphate(in) + H(+). Functionally, part of the ABC transporter complex PstSACB involved in phosphate import. Responsible for energy coupling to the transport system. This Nostoc sp. (strain PCC 7120 / SAG 25.82 / UTEX 2576) protein is Phosphate import ATP-binding protein PstB 2.